The chain runs to 829 residues: MKLSRRDFMKANAVAAAAAAAGLTIPTVARAVTDAGSDGITWDKAPCRFCGTGCGVLVGTQNGRIVASQGDPDAPVNRGLNCIKGYFLPKIMYGKDRLTQPLLRMKGGQYDKEGEFTPVSWDQAFDVMAAKFKGTLKEKGPGAVGMFGSGQWTVWEGYAAAKLFKAGFRSNNLDPNARHCMASAVVGFMRTFGMDEPMGCYDDIEQADAFVLWGSNMAEMHPILWSRITNRRLSNDKVQVAVLSTFEQRSFELADNPIIFTPQSDLVILNYIANYIIQNNAVDQAFMDKHVNIRKGATDIGYGLRPTDPLEKAAKNPGSDASEPMSFDDYKAFVADYTLEKTAKMTGVPQDQLLALAKLYADPNIKVVSYWTMGFNQHTRGVWANNLCYNIHLLTGKISKPGCGPFSLTGQPSACGTAREVGTFAHRLPADMVVTNEKHRQIAETRWKIPAGTIPDKVGLHAVAQDRALKDGKLNAYWVMCNNNMQAGPNINADRMPGWRDPRNFIVVSDPYPTVSALSADLILPTAMWVEKEGAYGNAERRTQFWHQQVKAPGEAKSDLWQLMEFSKRFTVDEVWPAALLAKMPALQGKTLYEVLYVNGNVDRYPLDEVPADRLNDEARACGFYVQKGLFEEYAGFGRGHGHDLAPFDAYHKARGIRWPVVDGKETLWRYREGYDPFVKNGEEVRFYGKPDGKAVIFALPYEPPAESPDQEYDLWLSTGRVLEHWHTGSMTRRVPELHRAFPEAVLFIHPLDAKARGLRRGDKVKVMSRRGELVSIVETRGRNRVPQGLVYMPFFDAAQLVNVLTLDATDPLSKEADFKKCAVKIEKV.

A signal peptide (tat-type signal) is located at residues 1 to 31 (MKLSRRDFMKANAVAAAAAAAGLTIPTVARA). Residues 40 to 96 (ITWDKAPCRFCGTGCGVLVGTQNGRIVASQGDPDAPVNRGLNCIKGYFLPKIMYGKD) enclose the 4Fe-4S Mo/W bis-MGD-type domain. Residues Cys-47, Cys-50, Cys-54, and Cys-82 each coordinate [4Fe-4S] cluster. Mo-bis(molybdopterin guanine dinucleotide)-binding positions include Lys-84, Gln-151, Asn-176, Cys-180, 213-220 (WGSNMAEM), 263-265 (QSD), Met-373, Gln-377, Asn-483, 509-510 (SD), Lys-532, Asp-559, and 719-728 (TGRVLEHWHT). A substrate-binding site is contributed by Phe-795. Asn-803 and Lys-820 together coordinate Mo-bis(molybdopterin guanine dinucleotide).

It belongs to the prokaryotic molybdopterin-containing oxidoreductase family. NasA/NapA/NarB subfamily. In terms of assembly, component of the periplasmic nitrate reductase NapAB complex composed of NapA and NapB. Requires [4Fe-4S] cluster as cofactor. It depends on Mo-bis(molybdopterin guanine dinucleotide) as a cofactor. Post-translationally, predicted to be exported by the Tat system. The position of the signal peptide cleavage has not been experimentally proven.

The protein localises to the periplasm. It catalyses the reaction 2 Fe(II)-[cytochrome] + nitrate + 2 H(+) = 2 Fe(III)-[cytochrome] + nitrite + H2O. Catalytic subunit of the periplasmic nitrate reductase complex NapAB. Receives electrons from NapB and catalyzes the reduction of nitrate to nitrite. The chain is Periplasmic nitrate reductase from Edwardsiella ictaluri (strain 93-146).